A 178-amino-acid chain; its full sequence is TM2 domain-containing protein biscotti (178 aa).

The N-terminal stretch at 1–18 is a signal peptide; sequence MFPVLLLLLFFFAKETHQ. Topologically, residues 19 to 99 are extracellular; the sequence is INVDCNELQM…YHLDTTLLLS (81 aa). Residues Asn69 and Asn75 are each glycosylated (N-linked (GlcNAc...) asparagine). The 44-residue stretch at 94-137 folds into the TM2 domain; that stretch reads TTLLLSVFLGMFGVDRFYLGYPGIGLLKFCTLGGMFLGQLIDIV. A helical membrane pass occupies residues 100 to 120; that stretch reads VFLGMFGVDRFYLGYPGIGLL. Topologically, residues 121-124 are cytoplasmic; sequence KFCT. The helical transmembrane segment at 125 to 145 threads the bilayer; that stretch reads LGGMFLGQLIDIVLIALQVVG. At 146 to 178 the chain is on the extracellular side; sequence PADGSAYVIPYYGAGIHIVRSDNTTYRLPRDDW. N-linked (GlcNAc...) asparagine glycosylation occurs at Asn168.

Belongs to the TM2 family.

It is found in the membrane. Its function is as follows. Positive regulator of Notch signaling. Maternal neurogenic factor involved in Notch signaling-dependent neuroectodermal specification during early embryogenesis. Functions cooperatively with amx/TM2D3 and amrt/TM2D2. This Drosophila melanogaster (Fruit fly) protein is TM2 domain-containing protein biscotti.